The chain runs to 358 residues: Putative ankyrin repeat protein FPV242 (358 aa).

ANK repeat units follow at residues 6 to 35 (NNYR…NMIV), 40 to 69 (NNHT…NLVY), 91 to 118 (TRRN…DKGV), 119 to 147 (ELTG…SVEY), 149 to 177 (GFFP…DINK), 180 to 209 (CGET…DIEK), 214 to 243 (EQDP…SIDT), 248 to 277 (NHKP…NPFI), 280 to 312 (EGNT…RLPG), and 316 to 345 (YYIQ…RITS).

This is Putative ankyrin repeat protein FPV242 from Fowlpox virus (strain NVSL) (FPV).